Here is a 318-residue protein sequence, read N- to C-terminus: Cytochrome c biogenesis protein CcsA (318 aa).

Helical transmembrane passes span 17–37 (VLAL…ISFW), 45–65 (SAVV…QLVL), 75–95 (ISNL…AQLL), 104–124 (IVSA…SFAL), 149–169 (VIMC…AVLF), 224–244 (TITV…VWAN), 258–275 (TWAL…HTRF), and 287–307 (VAVA…LLGI).

This sequence belongs to the CcmF/CycK/Ccl1/NrfE/CcsA family. As to quaternary structure, may interact with ccs1.

The protein resides in the cellular thylakoid membrane. Its function is as follows. Required during biogenesis of c-type cytochromes (cytochrome c6 and cytochrome f) at the step of heme attachment. The chain is Cytochrome c biogenesis protein CcsA from Prochlorococcus marinus (strain MIT 9303).